We begin with the raw amino-acid sequence, 287 residues long: Protease HtpX (287 aa).

Helical transmembrane passes span 4–24 and 36–56; these read IMLF…VLNI and LSGL…ISLM. A Zn(2+)-binding site is contributed by histidine 143. Residue glutamate 144 is part of the active site. A Zn(2+)-binding site is contributed by histidine 147. Helical transmembrane passes span 158–178 and 192–212; these read LMQG…ANIV and MVYF…ASFI. Residue glutamate 221 coordinates Zn(2+).

Belongs to the peptidase M48B family. The cofactor is Zn(2+).

The protein resides in the cell inner membrane. The protein is Protease HtpX of Vibrio parahaemolyticus serotype O3:K6 (strain RIMD 2210633).